An 830-amino-acid polypeptide reads, in one-letter code: Pentatricopeptide repeat-containing protein At5g55740, chloroplastic (830 aa).

A chloroplast-targeting transit peptide spans 1–59 (MASLPFNTIPNKVPFSVSSKPSSKHHDEQAHSPSSTSYFHRVSSLCKNGEIKEALSLVT). Positions 15 to 36 (FSVSSKPSSKHHDEQAHSPSST) are disordered. PPR repeat units lie at residues 69-103 (GPEIYGEILQGCVYERDLSTGKQIHARILKNGDFY), 106-136 (NEYIETKLVIFYAKCDALEIAEVLFSKLRVR), 137-171 (NVFSWAAIIGVKCRIGLCEGALMGFVEMLENEIFP), 172-206 (DNFVVPNVCKACGALKWSRFGRGVHGYVVKSGLED), 207-237 (CVFVASSLADMYGKCGVLDDASKVFDEIPDR), 238-272 (NAVAWNALMVGYVQNGKNEEAIRLFSDMRKQGVEP), 273-307 (TRVTVSTCLSASANMGGVEEGKQSHAIAIVNGMEL), 308-338 (DNILGTSLLNFYCKVGLIEYAEMVFDRMFEK), 339-373 (DVVTWNLIISGYVQQGLVEDAIYMCQLMRLEKLKY), 374-408 (DCVTLATLMSAAARTENLKLGKEVQCYCIRHSFES), 409-439 (DIVLASTVMDMYAKCGSIVDAKKVFDSTVEK), 440-474 (DLILWNTLLAAYAESGLSGEALRLFYGMQLEGVPP), 475-509 (NVITWNLIILSLLRNGQVDEAKDMFLQMQSSGIIP), 510-544 (NLISWTTMMNGMVQNGCSEEAILFLRKMQESGLRP), 545-575 (NAFSITVALSACAHLASLHIGRTIHGYIIRN), 581-611 (LVSIETSLVDMYAKCGDINKAEKVFGSKLYS), 612-646 (ELPLSNAMISAYALYGNLKEAIALYRSLEGVGLKP), 647-682 (DNITITNVLSACNHAGDINQAIEIFTDIVSKRSMKP), and 683-713 (CLEHYGLMVDLLASAGETEKALRLIEEMPFK). The segment at 718–793 (MIQSLVASCN…KPGCSWIQIT (76 aa)) is type E motif. The tract at residues 796-826 (EGVHVFVANDKTHTRINEIQMMLALLLYDMG) is type E(+) motif.

Belongs to the PPR family. PCMP-E subfamily.

It localises to the plastid. The protein localises to the chloroplast. Its function is as follows. Plays a major role in chloroplast RNA editing. Acts as a site-recognition transacting factor involved in the edition of the site 2 of ndhD (ndhD-2), which encodes a subunit of the NDH complex. This is Pentatricopeptide repeat-containing protein At5g55740, chloroplastic (CRR21) from Arabidopsis thaliana (Mouse-ear cress).